A 67-amino-acid polypeptide reads, in one-letter code: Small ribosomal subunit protein bS21 (67 aa).

Belongs to the bacterial ribosomal protein bS21 family.

The protein is Small ribosomal subunit protein bS21 of Desulfovibrio desulfuricans (strain ATCC 27774 / DSM 6949 / MB).